The following is a 77-amino-acid chain: Exodeoxyribonuclease 7 small subunit (77 aa).

Belongs to the XseB family. In terms of assembly, heterooligomer composed of large and small subunits.

It is found in the cytoplasm. It carries out the reaction Exonucleolytic cleavage in either 5'- to 3'- or 3'- to 5'-direction to yield nucleoside 5'-phosphates.. Its function is as follows. Bidirectionally degrades single-stranded DNA into large acid-insoluble oligonucleotides, which are then degraded further into small acid-soluble oligonucleotides. This chain is Exodeoxyribonuclease 7 small subunit, found in Alkaliphilus oremlandii (strain OhILAs) (Clostridium oremlandii (strain OhILAs)).